The primary structure comprises 185 residues: Lipid A acyltransferase PagP (185 aa).

Positions Met-1–Gly-14 are cleaved as a signal peptide. Cys-15 carries the N-palmitoyl cysteine lipid modification. Cys-15 is lipidated: S-diacylglycerol cysteine. Catalysis depends on residues His-57, Asp-100, and Ser-101.

Belongs to the lipid A palmitoyltransferase family. In terms of assembly, homodimer.

The protein resides in the cell outer membrane. The catalysed reaction is a lipid A + a 1,2-diacyl-sn-glycero-3-phosphocholine = a hepta-acyl lipid A + a 2-acyl-sn-glycero-3-phosphocholine. It carries out the reaction a lipid IVA + a 1,2-diacyl-sn-glycero-3-phosphocholine = a lipid IVB + a 2-acyl-sn-glycero-3-phosphocholine. The enzyme catalyses a lipid IIA + a 1,2-diacyl-sn-glycero-3-phosphocholine = a lipid IIB + a 2-acyl-sn-glycero-3-phosphocholine. Its function is as follows. Transfers a fatty acid residue from the sn-1 position of a phospholipid to the N-linked hydroxyfatty acid chain on the proximal unit of lipid A or its precursors. The protein is Lipid A acyltransferase PagP of Erwinia pyrifoliae (strain DSM 12163 / CIP 106111 / Ep16/96).